Reading from the N-terminus, the 587-residue chain is DELLA protein RGA (587 aa).

Residues 1 to 26 (MKRDHHQFQGRLSNHGTSSSSSSISK) are disordered. The DELLA motif motif lies at 44–48 (DELLA). The short motif at 66 to 70 (LEQLE) is the LEXLE motif element. A VHYNP motif motif is present at residues 89 to 93 (VHYNP). The tract at residues 152 to 181 (IDSSSSSNNQNKRLKSCSSPDSMVTSTSTG) is disordered. Residues 153-175 (DSSSSSNNQNKRLKSCSSPDSMV) show a composition bias toward polar residues. The GRAS domain occupies 212–581 (VDSQENGVRL…RPLITTSAWK (370 aa)). Positions 219 to 273 (VRLVHALMACAEAIQQNNLTLAEALVKQIGCLAVSQAGAMRKVATYFAEALARRI) are leucine repeat I (LRI). The interval 292 to 357 (QMHFYETCPY…GGPPTFRLTG (66 aa)) is VHIID. Residues 323–327 (VHVID) carry the VHIID motif. The tract at residues 371 to 403 (EVGCKLAQLAEAIHVEFEYRGFVANSLADLDAS) is leucine repeat II (LRII). The interval 415–502 (VAVNSVFELH…EVYLGKQICN (88 aa)) is PFYRE. The LXXLL motif motif lies at 423-427 (LHKLL). Residues 505–581 (ACEGPDRVER…RPLITTSAWK (77 aa)) are SAW.

This sequence belongs to the GRAS family. DELLA subfamily. In terms of assembly, interacts directly with the GID2/SLY1 component of the SCF(GID2) complex. Interacts (via N-terminus) with GID1A, GID1B and GID1B (via N-terminus). Binds to bHLH transcription factors such as MYC2, PIF1, PIF4, PIF6 and SPT. Interacts with the BOI proteins BOI, BRG1, BRG2 and BRG3. Interacts with NFYC9. Interacts with TOPP4. Interacts with FLZ5. Binds to zinc finger proteins MGP/IDD3, IDD4, IDD5, BIB/IDD9 and JKD/IDD10 in the nucleus. Binds to and coactivates GAF1/IDD2 and ENY/IDD1. Binds to PDF2 and ATML1. Phosphorylated. Phosphorylation may increase the interaction with GID2. In terms of processing, gibberellin (GA) induces dephosphorylation of RGA by TOPP4 and subsequent degradation by the proteasomal pathway. Post-translationally, ubiquitinated. Upon GA application it is ubiquitinated by the SCF(GID2) complex, leading to its subsequent degradation. O-fucosylated by SPY. O-fucosylation enhances RGA activity by promoting RGA binding to key transcription factors in brassinosteroid and light signaling pathways. As to expression, ubiquitously expressed. Expressed in roots, rosette leaves, bolting and mature stems, young and mature siliques, flower buds and influorescences.

It is found in the nucleus. In terms of biological role, probable transcriptional regulator that acts as a repressor of the gibberellin (GA) signaling pathway. Probably acts by participating in large multiprotein complexes that repress transcription of GA-inducible genes. Positively regulates XERICO expression in seeds. Upon GA application, it is degraded by the proteasome, allowing the GA signaling pathway. Compared to other DELLA proteins, it is the most sensitive to GA application. No effect of the BOI proteins on its stability. Its activity is probably regulated by other phytohormones such as auxin and ethylene, attenuation of auxin transport delaying its GA-induced degradation. Involved in the regulation of seed dormancy and germination, including glucose-induced delay of seed germination. The protein is DELLA protein RGA of Arabidopsis thaliana (Mouse-ear cress).